The sequence spans 144 residues: Maximins 6/Hv (144 aa).

The signal sequence occupies residues 1 to 18 (MNFKYIVAVSFLIASGYA). Positions 19 to 43 (RSEENDVQSLSQREVLEEETLREIR) are excised as a propeptide. Position 70 is an asparagine amide (Asn70). The propeptide occupies 74 to 123 (TAKGHEVMKRLEAVMRDLDSLDHPEEASERETRGFNQEEIANLFTKKEKR). An Isoleucine amide modification is found at Ile143.

The protein belongs to the bombinin family. In terms of tissue distribution, expressed by the skin glands.

The protein localises to the secreted. In terms of biological role, shows antimicrobial activity against bacteria and against the fungus C.albicans. It has little hemolytic activity. Functionally, shows antimicrobial activity against bacteria and against the fungus C.albicans. Shows strong hemolytic activity. This chain is Maximins 6/Hv, found in Bombina maxima (Giant fire-bellied toad).